Consider the following 464-residue polypeptide: Neuronal acetylcholine receptor subunit beta-3 (464 aa).

The signal sequence occupies residues 1–30 (MTGFLRVFLVLSATLSGSWVTLTATAGLSS). Topologically, residues 31 to 238 (VAEHEDALLR…VTYSFVLRRL (208 aa)) are extracellular. Residues asparagine 55 and asparagine 172 are each glycosylated (N-linked (GlcNAc...) asparagine). Cysteine 159 and cysteine 173 form a disulfide bridge. The next 3 membrane-spanning stretches (helical) occupy residues 239–263 (PLFYTLFLIIPCLGLSFLTVLVFYL), 271–288 (LSLSTSVLVSLTVFLLVI), and 305–326 (YLLFIMIFVTLSIIVTVFVINV). The Cytoplasmic segment spans residues 327–434 (HHRSSSTYHP…WKFVAQVLDR (108 aa)). The helical transmembrane segment at 435–453 (IFLWLFLIASVLGSILIFI) threads the bilayer.

The protein belongs to the ligand-gated ion channel (TC 1.A.9) family. Acetylcholine receptor (TC 1.A.9.1) subfamily. Beta-3/CHRNB3 sub-subfamily. In terms of assembly, neuronal AChR seems to be composed of two different type of subunits: alpha and beta. CHRNB3/beta-3 subunit is only able to form functional nAChRs when co-assembled with another beta subunit. Participates in pentameric assemblies along with CHRNA4/alpha-4 and CHRNB2/beta-2 subunits and with CHRNA6/alpha-6 as well, forming stoichiometries such as (CHRNA3:CHRNB4)2:CHRNB3, (CHRNA4:CHRNB2)2:CHRNB3 or (CHRNA6:CHRNB2)2:CHRNB3.

Its subcellular location is the synaptic cell membrane. It is found in the cell membrane. The catalysed reaction is Ca(2+)(in) = Ca(2+)(out). It carries out the reaction K(+)(in) = K(+)(out). The enzyme catalyses Na(+)(in) = Na(+)(out). Its activity is regulated as follows. Activated by a myriad of ligands such as acetylcholine, cytisine, nicotine, choline and epibatidine. Functionally, component of neuronal acetylcholine receptors (nAChRs) that function as pentameric, ligand-gated cation channels with high calcium permeability among other activities. nAChRs are excitatory neurotrasnmitter receptors formed by a collection of nAChR subunits known to mediate synaptic transmission in the nervous system and the neuromuscular junction. Each nAchR subunit confers differential attributes to channel properties, including activation, deactivation and desensitization kinetics, pH sensitivity, cation permeability, and binding to allosteric modulators. Has an accessory rather than functional role and is only able to form functional nAChRs when co-assembled with another beta subunit. Participates in pentameric assemblies along with CHRNA3, CHRNA4, CHRNA6, CHRNB2 and CHRNB4. Modulates receptor assembly and increases receptor sensitivity to nicotine when associated with CHRNB2, CHRNA4 and/or CHRNA6 as well as CHRNA3 and CHRNB4. Seems to play a role in nicotine addiction. In Rattus norvegicus (Rat), this protein is Neuronal acetylcholine receptor subunit beta-3 (Chrnb3).